Here is a 2049-residue protein sequence, read N- to C-terminus: Nonribosomal peptide synthetase tcpP (2049 aa).

Positions 13-395 are adenylation 1; that stretch reads RHHAEAHPEA…LGRKDQLIKN (383 aa). Positions 497-573 constitute a Carrier 1 domain; that stretch reads ATADTKLSAL…EISNHIIEFD (77 aa). An O-(pantetheine 4'-phosphoryl)serine modification is found at S534. The condensation 1 stretch occupies residues 605 to 913; it reads REITMTDVQR…ALGSKMDLLS (309 aa). Residues 1071–1452 are adenylation 2; the sequence is VAAWPMSVAL…GRADHQVKVR (382 aa). The Carrier 2 domain maps to 1550-1625; sequence DHTELVVSQV…SLAASVKKHL (76 aa). S1585 bears the O-(pantetheine 4'-phosphoryl)serine mark. The segment at 1662–2044 is condensation 2; that stretch reads MHKQASNPSS…FEQEICNLLD (383 aa).

Belongs to the NRP synthetase family.

Its pathway is secondary metabolite biosynthesis. In terms of biological role, nonribosomal peptide synthetase; part of the gene cluster that mediates the biosynthesis of an unusual class of epipolythiodioxopiperazines (ETPs) lacking the reactive thiol group important for toxicity. Firstly, L-tyrosine is prenylated by tcpD, before undergoing condensation with L-glycine in a reaction catalyzed by the NRPS tcpP leading to the diketopiperazine (DKP) backbone. Afterwards the alpha-carbon of tyrosine is oxidized by the cytochrome P450 tcpC to form a hydroxyl group. However, in contrast other ETP biosynthesis pathways studied so far, tcpC is not able to bishydroxylate the DKP at both alpha-carbon positions, but hydroxylates the alpha-carbon of the tyrosine part and the nitrogen of the glycine part. The next steps involve an alpha,beta-elimination reaction catalyzed by tcpI, a methylation by the methyltransferase tcpN the action of the four enzyme cascade tcpG/K/J/I. Due to a dysfunctional cytochrome P450 monooxygenase tcpC, the pathway leads to the biosynthesis of probable non-toxic metabolites lacking the reactive thiol group. The polypeptide is Nonribosomal peptide synthetase tcpP (Claviceps purpurea (strain 20.1) (Ergot fungus)).